A 907-amino-acid polypeptide reads, in one-letter code: Leucine-rich repeat-containing G-protein coupled receptor 5 (907 aa).

An N-terminal signal peptide occupies residues 1–21; it reads MDTSRVRMLLSLLALLQLVAA. Over 22 to 561 the chain is Extracellular; it reads GSPPRPDTMP…EHLFGSWLIR (540 aa). The LRRNT domain maps to 33–64; it reads GCPSYCHCELDGRMLLRVDCSDLGLSELPSNL. Cystine bridges form between Cys34–Cys40 and Cys38–Cys52. LRR repeat units lie at residues 44–64, 65–88, 89–112, 114–136, 137–160, 162–184, 186–208, 209–232, 233–256, 257–279, 281–303, 304–327, 328–350, 351–375, 377–396, 397–420, and 422–444; these read GRML…PSNL, SVFT…LLHR, LRFL…AFAG, HSLK…ALQN, LRSL…CFSG, HSLR…AFRS, SALQ…AFGN, LSSL…CFDG, LHSL…IKTL, SNLK…AFVG, PSLI…AFQH, LPEL…LTGT, ATLE…VCDQ, LPNL…GCQK, QKID…TFQQ, LFNL…AFST, and PSLI…GLHG. N-linked (GlcNAc...) asparagine glycosylation is found at Asn63 and Asn77. Asn208 carries an N-linked (GlcNAc...) asparagine glycan. A disulfide bridge connects residues Cys348 and Cys373. Cys479 and Cys541 are disulfide-bonded. A helical transmembrane segment spans residues 562 to 582; it reads IGVWTTAVLALSCNALVAFTV. The stretch at 564 to 585 is one LRR 18 repeat; that stretch reads VWTTAVLALSCNALVAFTVFRT. Residues 583–595 are Cytoplasmic-facing; that stretch reads FRTPLYISSIKLL. The chain crosses the membrane as a helical span at residues 596–616; that stretch reads IGVIAVVDILMGVSSAILAVV. The Extracellular segment spans residues 617-638; sequence DTFTFGSFAQHGAWWEGGIGCQ. Cys637 and Cys712 are oxidised to a cystine. The helical transmembrane segment at 639 to 659 threads the bilayer; that stretch reads IVGFLSIFASESSVFLLTLAA. Over 660 to 682 the chain is Cytoplasmic; sequence LERGFSVKCSSKFEMKAPLSSLK. The helical transmembrane segment at 683 to 703 threads the bilayer; it reads AIILLCVLLALTIATVPLLGG. At 704–723 the chain is on the extracellular side; the sequence is SEYNASPLCLPLPFGEPSTT. The chain crosses the membrane as a helical span at residues 724–744; sequence GYMVALVLLNSLCFLIMTIAY. Residues 745–775 are Cytoplasmic-facing; sequence TRLYCSLEKGELENLWDCSMVKHTALLLFTN. A helical membrane pass occupies residues 776–796; that stretch reads CILYCPVAFLSFSSLLNLTFI. Residues 797–802 are Extracellular-facing; the sequence is SPEVIK. The helical transmembrane segment at 803–823 threads the bilayer; sequence FILLVIVPLPACLNPLLYIVF. Topologically, residues 824–907 are cytoplasmic; it reads NPHFKEDMGS…LSSVAFVPCL (84 aa).

The protein belongs to the G-protein coupled receptor 1 family. As to quaternary structure, identified in a complex composed of RNF43, LGR5 and RSPO1. Also interacts with other R-spondin ligands, including RSPO2, RSPO3 and RSPO4.

It is found in the cell membrane. Its subcellular location is the golgi apparatus. The protein localises to the trans-Golgi network membrane. Functionally, receptor for R-spondins that potentiates the canonical Wnt signaling pathway and acts as a stem cell marker of the intestinal epithelium and the hair follicle. Upon binding to R-spondins (RSPO1, RSPO2, RSPO3 or RSPO4), associates with phosphorylated LRP6 and frizzled receptors that are activated by extracellular Wnt receptors, triggering the canonical Wnt signaling pathway to increase expression of target genes. In contrast to classical G-protein coupled receptors, does not activate heterotrimeric G-proteins to transduce the signal. Involved in the development and/or maintenance of the adult intestinal stem cells during postembryonic development. The protein is Leucine-rich repeat-containing G-protein coupled receptor 5 (Lgr5) of Rattus norvegicus (Rat).